A 24-amino-acid polypeptide reads, in one-letter code: Pyruvate kinase (24 aa).

The protein belongs to the pyruvate kinase family. As to quaternary structure, homotetramer. Requires Mg(2+) as cofactor. The cofactor is K(+).

It carries out the reaction pyruvate + ATP = phosphoenolpyruvate + ADP + H(+). It functions in the pathway carbohydrate degradation; glycolysis; pyruvate from D-glyceraldehyde 3-phosphate: step 5/5. The protein is Pyruvate kinase (pyk) of Clostridium pasteurianum.